Here is a 48-residue protein sequence, read N- to C-terminus: MNKQRFLFAAKISGIHFLLSLTVAALLAGLIFFVWYPFPYQKIMGSFK.

In Dichelobacter nodosus (Bacteroides nodosus), this protein is Fimbrial assembly protein, serogroup E2 (fimB).